A 125-amino-acid chain; its full sequence is Small ribosomal subunit protein uS12 (125 aa).

Residue Asp89 is modified to 3-methylthioaspartic acid.

Belongs to the universal ribosomal protein uS12 family. As to quaternary structure, part of the 30S ribosomal subunit. Contacts proteins S8 and S17. May interact with IF1 in the 30S initiation complex.

Functionally, with S4 and S5 plays an important role in translational accuracy. In terms of biological role, interacts with and stabilizes bases of the 16S rRNA that are involved in tRNA selection in the A site and with the mRNA backbone. Located at the interface of the 30S and 50S subunits, it traverses the body of the 30S subunit contacting proteins on the other side and probably holding the rRNA structure together. The combined cluster of proteins S8, S12 and S17 appears to hold together the shoulder and platform of the 30S subunit. In Clostridium botulinum (strain ATCC 19397 / Type A), this protein is Small ribosomal subunit protein uS12.